Reading from the N-terminus, the 474-residue chain is tRNA-2-methylthio-N(6)-dimethylallyladenosine synthase (474 aa).

The MTTase N-terminal domain maps to 3-120 (KKLHIKTWGC…LPEMINHVNG (118 aa)). 6 residues coordinate [4Fe-4S] cluster: Cys12, Cys49, Cys83, Cys157, Cys161, and Cys164. Positions 143–375 (RAEGPTAFVS…QERITQQAMQ (233 aa)) constitute a Radical SAM core domain. The region spanning 378-441 (RRMKGKVQRI…PNSLRGVLLR (64 aa)) is the TRAM domain.

Belongs to the methylthiotransferase family. MiaB subfamily. Monomer. Requires [4Fe-4S] cluster as cofactor.

Its subcellular location is the cytoplasm. The catalysed reaction is N(6)-dimethylallyladenosine(37) in tRNA + (sulfur carrier)-SH + AH2 + 2 S-adenosyl-L-methionine = 2-methylsulfanyl-N(6)-dimethylallyladenosine(37) in tRNA + (sulfur carrier)-H + 5'-deoxyadenosine + L-methionine + A + S-adenosyl-L-homocysteine + 2 H(+). Catalyzes the methylthiolation of N6-(dimethylallyl)adenosine (i(6)A), leading to the formation of 2-methylthio-N6-(dimethylallyl)adenosine (ms(2)i(6)A) at position 37 in tRNAs that read codons beginning with uridine. In Sodalis glossinidius (strain morsitans), this protein is tRNA-2-methylthio-N(6)-dimethylallyladenosine synthase.